The following is a 460-amino-acid chain: A-type ATP synthase subunit B (460 aa).

The protein belongs to the ATPase alpha/beta chains family. In terms of assembly, has multiple subunits with at least A(3), B(3), C, D, E, F, H, I and proteolipid K(x).

Its subcellular location is the cell membrane. Functionally, component of the A-type ATP synthase that produces ATP from ADP in the presence of a proton gradient across the membrane. The B chain is a regulatory subunit. In Methanosarcina acetivorans (strain ATCC 35395 / DSM 2834 / JCM 12185 / C2A), this protein is A-type ATP synthase subunit B.